We begin with the raw amino-acid sequence, 130 residues long: Small ribosomal subunit protein uS11 (130 aa).

Residues 109 to 130 (EDVTPIPHDGTGRPGGKRGRRV) form a disordered region.

Belongs to the universal ribosomal protein uS11 family. Part of the 30S ribosomal subunit.

Its function is as follows. Located on the platform of the 30S subunit. The chain is Small ribosomal subunit protein uS11 from Methanosphaera stadtmanae (strain ATCC 43021 / DSM 3091 / JCM 11832 / MCB-3).